Consider the following 802-residue polypeptide: DNA mismatch repair protein MutS (802 aa).

Residue 617-624 (GPNMGGKS) coordinates ATP.

This sequence belongs to the DNA mismatch repair MutS family.

Its function is as follows. This protein is involved in the repair of mismatches in DNA. It is possible that it carries out the mismatch recognition step. This protein has a weak ATPase activity. This chain is DNA mismatch repair protein MutS, found in Buchnera aphidicola subsp. Acyrthosiphon pisum (strain 5A).